Consider the following 397-residue polypeptide: 4-O-methyl-glucuronoyl methylesterase (397 aa).

A signal peptide spans 1–18 (MVHLTSALLVAGAAFAAA). 3 disulfide bridges follow: cysteine 31–cysteine 65, cysteine 212–cysteine 347, and cysteine 244–cysteine 319. The short motif at 211–216 (GCSRNG) is the GXSYXG catalytic site motif element. Residue serine 213 is the Nucleophile of the active site. Residues lysine 217, glutamine 259, glutamate 267, and tryptophan 310 each contribute to the substrate site. The Proton donor/acceptor role is filled by histidine 346.

The protein belongs to the carbohydrate esterase 15 (CE15) family.

Its subcellular location is the secreted. The enzyme catalyses a 4-O-methyl-alpha-D-glucuronosyl ester derivative + H2O = 4-O-methyl-alpha-D-glucuronate derivative + an alcohol + H(+). Glucuronoyl esterase which may play a significant role in biomass degradation, as it is considered to disconnect hemicellulose from lignin through the hydrolysis of the ester bond between 4-O-methyl-D-glucuronic acid residues of glucuronoxylans and aromatic alcohols of lignin. This is 4-O-methyl-glucuronoyl methylesterase (ge2) from Thermothelomyces thermophilus (strain ATCC 42464 / BCRC 31852 / DSM 1799) (Sporotrichum thermophile).